The chain runs to 588 residues: Adenine deaminase (588 aa).

This sequence belongs to the metallo-dependent hydrolases superfamily. Adenine deaminase family. Homodimer. Requires Mn(2+) as cofactor.

It carries out the reaction adenine + H2O + H(+) = hypoxanthine + NH4(+). In Shigella boydii serotype 4 (strain Sb227), this protein is Adenine deaminase.